Reading from the N-terminus, the 350-residue chain is Biotin synthase (350 aa).

The Radical SAM core domain maps to 38-256 (NYVQVSTLLS…IAVARIMMPT (219 aa)). [4Fe-4S] cluster is bound by residues Cys53, Cys57, and Cys60. Residues Cys97, Cys128, Cys188, and Arg260 each contribute to the [2Fe-2S] cluster site.

It belongs to the radical SAM superfamily. Biotin synthase family. As to quaternary structure, homodimer. [4Fe-4S] cluster serves as cofactor. Requires [2Fe-2S] cluster as cofactor.

It catalyses the reaction (4R,5S)-dethiobiotin + (sulfur carrier)-SH + 2 reduced [2Fe-2S]-[ferredoxin] + 2 S-adenosyl-L-methionine = (sulfur carrier)-H + biotin + 2 5'-deoxyadenosine + 2 L-methionine + 2 oxidized [2Fe-2S]-[ferredoxin]. The protein operates within cofactor biosynthesis; biotin biosynthesis; biotin from 7,8-diaminononanoate: step 2/2. Catalyzes the conversion of dethiobiotin (DTB) to biotin by the insertion of a sulfur atom into dethiobiotin via a radical-based mechanism. In Vibrio vulnificus (strain CMCP6), this protein is Biotin synthase.